A 210-amino-acid polypeptide reads, in one-letter code: uncharacterized protein (210 aa).

The next 6 helical transmembrane spans lie at 9 to 29 (WVVT…IIAK), 35 to 55 (LIVN…MAWP), 64 to 84 (GPAV…VVAV), 91 to 111 (GLYG…AAMN), 149 to 169 (IWFS…AVFW), and 190 to 210 (IGQA…LFPV).

It localises to the cell membrane. This is an uncharacterized protein from Mycobacterium bovis (strain ATCC BAA-935 / AF2122/97).